Consider the following 447-residue polypeptide: tRNA threonylcarbamoyladenosine dehydratase 2 (447 aa).

A run of 3 helical transmembrane segments spans residues 9 to 29, 86 to 106, and 294 to 314; these read LITA…YAWT, NQYV…NSLV, and ILPV…TWIL.

This sequence belongs to the HesA/MoeB/ThiF family.

The protein resides in the mitochondrion outer membrane. Its function is as follows. Catalyzes the ATP-dependent dehydration of threonylcarbamoyladenosine at position 37 (t(6)A37) to form cyclic t(6)A37 (ct(6)A37) in tRNAs that read codons beginning with adenine. This is tRNA threonylcarbamoyladenosine dehydratase 2 (TCD2) from Saccharomyces cerevisiae (strain ATCC 204508 / S288c) (Baker's yeast).